The sequence spans 197 residues: Xanthine phosphoribosyltransferase (197 aa).

2 residues coordinate xanthine: L20 and N27. Residue 128–132 (ANGQA) participates in 5-phospho-alpha-D-ribose 1-diphosphate binding. Residue K156 participates in xanthine binding.

It belongs to the purine/pyrimidine phosphoribosyltransferase family. Xpt subfamily. As to quaternary structure, homodimer.

The protein localises to the cytoplasm. The enzyme catalyses XMP + diphosphate = xanthine + 5-phospho-alpha-D-ribose 1-diphosphate. Its pathway is purine metabolism; XMP biosynthesis via salvage pathway; XMP from xanthine: step 1/1. Its function is as follows. Converts the preformed base xanthine, a product of nucleic acid breakdown, to xanthosine 5'-monophosphate (XMP), so it can be reused for RNA or DNA synthesis. The chain is Xanthine phosphoribosyltransferase from Bacillus cytotoxicus (strain DSM 22905 / CIP 110041 / 391-98 / NVH 391-98).